Here is a 125-residue protein sequence, read N- to C-terminus: Small ribosomal subunit protein eS8 (125 aa).

Positions 1–11 are enriched in polar residues; that stretch reads MAISQGKSTRL. The segment at 1 to 38 is disordered; it reads MAISQGKSTRLPSGARNVANRGKRKAELGRDPAETRVD. The span at 25 to 38 shows a compositional bias: basic and acidic residues; that stretch reads KAELGRDPAETRVD.

The protein belongs to the eukaryotic ribosomal protein eS8 family. In terms of assembly, part of the 30S ribosomal subunit.

The chain is Small ribosomal subunit protein eS8 from Methanobrevibacter smithii (strain ATCC 35061 / DSM 861 / OCM 144 / PS).